A 246-amino-acid chain; its full sequence is Ribonuclease PH (246 aa).

Residues R91 and 129–131 (GTR) each bind phosphate.

It belongs to the RNase PH family. Homohexameric ring arranged as a trimer of dimers.

It carries out the reaction tRNA(n+1) + phosphate = tRNA(n) + a ribonucleoside 5'-diphosphate. In terms of biological role, phosphorolytic 3'-5' exoribonuclease that plays an important role in tRNA 3'-end maturation. Removes nucleotide residues following the 3'-CCA terminus of tRNAs; can also add nucleotides to the ends of RNA molecules by using nucleoside diphosphates as substrates, but this may not be physiologically important. Probably plays a role in initiation of 16S rRNA degradation (leading to ribosome degradation) during starvation. In Burkholderia cenocepacia (strain ATCC BAA-245 / DSM 16553 / LMG 16656 / NCTC 13227 / J2315 / CF5610) (Burkholderia cepacia (strain J2315)), this protein is Ribonuclease PH.